The sequence spans 479 residues: Ribosomal RNA small subunit methyltransferase F (479 aa).

Residues alanine 128–lysine 134, glutamate 152, aspartate 179, and aspartate 197 each bind S-adenosyl-L-methionine. The active-site Nucleophile is the cysteine 250.

This sequence belongs to the class I-like SAM-binding methyltransferase superfamily. RsmB/NOP family.

Its subcellular location is the cytoplasm. The catalysed reaction is cytidine(1407) in 16S rRNA + S-adenosyl-L-methionine = 5-methylcytidine(1407) in 16S rRNA + S-adenosyl-L-homocysteine + H(+). Its function is as follows. Specifically methylates the cytosine at position 1407 (m5C1407) of 16S rRNA. The polypeptide is Ribosomal RNA small subunit methyltransferase F (Shewanella halifaxensis (strain HAW-EB4)).